The sequence spans 1273 residues: DNA-directed RNA polymerase subunit beta (1273 aa).

A disordered region spans residues 1252-1273; it reads ADDQDLVVSSNDEEVSENDERS.

Belongs to the RNA polymerase beta chain family. In terms of assembly, the RNAP catalytic core consists of 2 alpha, 1 beta, 1 beta' and 1 omega subunit. When a sigma factor is associated with the core the holoenzyme is formed, which can initiate transcription.

The catalysed reaction is RNA(n) + a ribonucleoside 5'-triphosphate = RNA(n+1) + diphosphate. DNA-dependent RNA polymerase catalyzes the transcription of DNA into RNA using the four ribonucleoside triphosphates as substrates. The polypeptide is DNA-directed RNA polymerase subunit beta (Dehalococcoides mccartyi (strain CBDB1)).